Here is a 232-residue protein sequence, read N- to C-terminus: GTP cyclohydrolase III (232 aa).

Belongs to the archaeal-type GTP cyclohydrolase family.

It catalyses the reaction GTP + 3 H2O = 2-amino-5-formylamino-6-(5-phospho-D-ribosylamino)pyrimidin-4(3H)-one + 2 phosphate + 2 H(+). Catalyzes the formation of 2-amino-5-formylamino-6-ribofuranosylamino-4(3H)-pyrimidinone ribonucleotide monophosphate and inorganic phosphate from GTP. Also has an independent pyrophosphate phosphohydrolase activity. The sequence is that of GTP cyclohydrolase III from Saccharolobus islandicus (strain Y.N.15.51 / Yellowstone #2) (Sulfolobus islandicus).